Reading from the N-terminus, the 295-residue chain is Probable protein phosphatase 2C 6 (295 aa).

One can recognise a PPM-type phosphatase domain in the interval 23–294; the sequence is QYAATHMQGW…DNMTCILIQF (272 aa). Mn(2+) is bound by residues aspartate 57, glycine 58, aspartate 237, and aspartate 285.

Belongs to the PP2C family. Mg(2+) is required as a cofactor. Requires Mn(2+) as cofactor.

Its subcellular location is the membrane. It catalyses the reaction O-phospho-L-seryl-[protein] + H2O = L-seryl-[protein] + phosphate. The enzyme catalyses O-phospho-L-threonyl-[protein] + H2O = L-threonyl-[protein] + phosphate. In terms of biological role, enzyme with a broad specificity. This chain is Probable protein phosphatase 2C 6, found in Paramecium tetraurelia.